The sequence spans 630 residues: 1,4-alpha-glucan branching enzyme GlgB (630 aa).

Asp308 (nucleophile) is an active-site residue. Glu361 acts as the Proton donor in catalysis.

This sequence belongs to the glycosyl hydrolase 13 family. GlgB subfamily. As to quaternary structure, monomer.

It catalyses the reaction Transfers a segment of a (1-&gt;4)-alpha-D-glucan chain to a primary hydroxy group in a similar glucan chain.. Its pathway is glycan biosynthesis; glycogen biosynthesis. Catalyzes the formation of the alpha-1,6-glucosidic linkages in glycogen by scission of a 1,4-alpha-linked oligosaccharide from growing alpha-1,4-glucan chains and the subsequent attachment of the oligosaccharide to the alpha-1,6 position. The protein is 1,4-alpha-glucan branching enzyme GlgB of Halothermothrix orenii (strain H 168 / OCM 544 / DSM 9562).